Here is a 512-residue protein sequence, read N- to C-terminus: tRNA-guanine(15) transglycosylase (512 aa).

The Nucleophile role is filled by D85. D120 lines the substrate pocket. C272, C274, and C277 together coordinate Zn(2+).

It belongs to the archaeosine tRNA-ribosyltransferase family. The cofactor is Zn(2+).

It carries out the reaction guanosine(15) in tRNA + 7-cyano-7-deazaguanine = 7-cyano-7-carbaguanosine(15) in tRNA + guanine. Its pathway is tRNA modification; archaeosine-tRNA biosynthesis. Functionally, exchanges the guanine residue with 7-cyano-7-deazaguanine (preQ0) at position 15 in the dihydrouridine loop (D-loop) of archaeal tRNAs. This Aeropyrum pernix (strain ATCC 700893 / DSM 11879 / JCM 9820 / NBRC 100138 / K1) protein is tRNA-guanine(15) transglycosylase.